Consider the following 149-residue polypeptide: Extracellular protease inhibitor 1 (149 aa).

A signal peptide spans 1 to 16 (MKSALLFTLVVAAVHA). 2 Kazal-like domains span residues 29-86 (ESNE…SSTG) and 88-141 (QPPS…ACVG). 2 disulfides stabilise this stretch: Cys-35–Cys-65 and Cys-39–Cys-58. Asn-67 carries an N-linked (GlcNAc...) asparagine glycan. 3 cysteine pairs are disulfide-bonded: Cys-94–Cys-124, Cys-98–Cys-117, and Cys-106–Cys-139.

In terms of assembly, interacts with host subtilisin-like protease P69B.

Its subcellular location is the secreted. Secreted effector that interacts with and inhibits the pathogenesis-related P69B subtilisin-like serine protease of host tomato. Inhibition of host proteases by a pathogen extracellular protease inhibitor forms a specific type of defense-counterdefense mechanism between plants and microbial pathogens. In Phytophthora infestans (Potato late blight agent), this protein is Extracellular protease inhibitor 1.